The sequence spans 157 residues: AP-1 complex subunit sigma-2 (157 aa).

This sequence belongs to the adaptor complexes small subunit family. As to quaternary structure, adaptor protein complex 1 (AP-1) is a heterotetramer composed of two large adaptins (gamma-type subunit AP1G1 and beta-type subunit AP1B1), a medium adaptin (mu-type subunit AP1M1 or AP1M2) and a small adaptin (sigma-type subunit AP1S1 or AP1S2 or AP1S3). Binds to MUC1. As to expression, widely expressed.

The protein resides in the golgi apparatus. It localises to the cytoplasmic vesicle membrane. It is found in the membrane. Its subcellular location is the clathrin-coated pit. In terms of biological role, subunit of clathrin-associated adaptor protein complex 1 that plays a role in protein sorting in the late-Golgi/trans-Golgi network (TGN) and/or endosomes. The AP complexes mediate both the recruitment of clathrin to membranes and the recognition of sorting signals within the cytosolic tails of transmembrane cargo molecules. This Homo sapiens (Human) protein is AP-1 complex subunit sigma-2 (AP1S2).